The following is a 302-amino-acid chain: Putative F-box protein At1g32420 (302 aa).

Residues 1–10 (MKRGNEENNH) show a composition bias toward basic and acidic residues. The interval 1-27 (MKRGNEENNHKTSSSSSTQRLSRRKIS) is disordered. One can recognise an F-box domain in the interval 31–78 (KSGNVNIPLDLTVEILKKLPAKSLLRFQCVSKQWLSIISSRRDFIDSI).

The polypeptide is Putative F-box protein At1g32420 (Arabidopsis thaliana (Mouse-ear cress)).